The following is a 414-amino-acid chain: uncharacterized protein (414 aa).

The segment at 204 to 230 (LVGTPAPGPNGSNSDGDSERASQDVRD) is disordered. A compositionally biased stretch (basic and acidic residues) spans 220 to 230 (DSERASQDVRD).

It belongs to the CdaR family.

This is an uncharacterized protein from Mycobacterium tuberculosis (strain CDC 1551 / Oshkosh).